We begin with the raw amino-acid sequence, 114 residues long: Large ribosomal subunit protein bL20c (114 aa).

The protein belongs to the bacterial ribosomal protein bL20 family.

It is found in the plastid. The protein localises to the cyanelle. Functionally, binds directly to 23S ribosomal RNA and is necessary for the in vitro assembly process of the 50S ribosomal subunit. It is not involved in the protein synthesizing functions of that subunit. The protein is Large ribosomal subunit protein bL20c (rpl20) of Cyanophora paradoxa.